The sequence spans 145 residues: Transcriptional regulator SlyA (145 aa).

Residues 2–135 (ELPLGSDLAR…LALLVSRLEK (134 aa)) enclose the HTH marR-type domain. The segment at residues 49–72 (QIQLAKAIGIEQPSLVRTLDQLEE) is a DNA-binding region (H-T-H motif).

Belongs to the SlyA family. As to quaternary structure, homodimer.

Functionally, transcription regulator that can specifically activate or repress expression of target genes. Regulates genes involved in production of antibiotic and exoenzyme virulence determinants in the phytopathogen. Required for the expression of the virulence protein evf during Drosophila melanogaster infection. The protein is Transcriptional regulator SlyA of Pectobacterium carotovorum subsp. carotovorum (Erwinia carotovora subsp. carotovora).